We begin with the raw amino-acid sequence, 46 residues long: Osteocalcin 2 (46 aa).

Residues 1–43 (AVPAGTLSPLQMESLREVCEVNVACDEMADTAGIVAAYTXFYG) form the Gla domain. T6 bears the Phosphothreonine mark. Ca(2+) contacts are provided by E13, E17, E20, and D26. 4-carboxyglutamate occurs at positions 13, 17, and 20. C19 and C25 are disulfide-bonded. 4-carboxyglutamate is present on E27.

This sequence belongs to the osteocalcin/matrix Gla protein family. In terms of processing, gamma-carboxyglutamate residues are formed by vitamin K dependent carboxylation by GGCX. These residues are essential for the binding of calcium.

The protein resides in the secreted. Functionally, the carboxylated form is one of the main organic components of the bone matrix, which constitutes 1-2% of the total bone protein. The carboxylated form binds strongly to apatite and calcium. The polypeptide is Osteocalcin 2 (Solea senegalensis (Senegalese sole)).